The primary structure comprises 512 residues: Lysine--tRNA ligase (512 aa).

Mg(2+) contacts are provided by glutamate 408 and glutamate 415.

This sequence belongs to the class-II aminoacyl-tRNA synthetase family. In terms of assembly, homodimer. Mg(2+) is required as a cofactor.

It localises to the cytoplasm. The catalysed reaction is tRNA(Lys) + L-lysine + ATP = L-lysyl-tRNA(Lys) + AMP + diphosphate. This is Lysine--tRNA ligase from Prochlorococcus marinus (strain MIT 9312).